A 95-amino-acid chain; its full sequence is Aspartyl/glutamyl-tRNA(Asn/Gln) amidotransferase subunit C (95 aa).

Belongs to the GatC family. Heterotrimer of A, B and C subunits.

The catalysed reaction is L-glutamyl-tRNA(Gln) + L-glutamine + ATP + H2O = L-glutaminyl-tRNA(Gln) + L-glutamate + ADP + phosphate + H(+). It carries out the reaction L-aspartyl-tRNA(Asn) + L-glutamine + ATP + H2O = L-asparaginyl-tRNA(Asn) + L-glutamate + ADP + phosphate + 2 H(+). Functionally, allows the formation of correctly charged Asn-tRNA(Asn) or Gln-tRNA(Gln) through the transamidation of misacylated Asp-tRNA(Asn) or Glu-tRNA(Gln) in organisms which lack either or both of asparaginyl-tRNA or glutaminyl-tRNA synthetases. The reaction takes place in the presence of glutamine and ATP through an activated phospho-Asp-tRNA(Asn) or phospho-Glu-tRNA(Gln). The polypeptide is Aspartyl/glutamyl-tRNA(Asn/Gln) amidotransferase subunit C (Azotobacter vinelandii (strain DJ / ATCC BAA-1303)).